We begin with the raw amino-acid sequence, 593 residues long: Arginine--tRNA ligase (593 aa).

Positions 138-148 (ANPTGPLHVGH) match the 'HIGH' region motif.

The protein belongs to the class-I aminoacyl-tRNA synthetase family. As to quaternary structure, monomer.

It is found in the cytoplasm. The catalysed reaction is tRNA(Arg) + L-arginine + ATP = L-arginyl-tRNA(Arg) + AMP + diphosphate. The chain is Arginine--tRNA ligase from Burkholderia cenocepacia (strain ATCC BAA-245 / DSM 16553 / LMG 16656 / NCTC 13227 / J2315 / CF5610) (Burkholderia cepacia (strain J2315)).